The chain runs to 800 residues: Ent-copalyl diphosphate synthase 2 (800 aa).

The interval glutamine 52–alanine 80 is disordered. Residues glutamate 55–arginine 69 show a composition bias toward basic and acidic residues. Lysine 242 serves as a coordination point for substrate. Aspartate 374 and aspartate 376 together coordinate Mg(2+). The DXDD motif motif lies at aspartate 374–aspartate 377. Position 461 (lysine 461) interacts with substrate.

It belongs to the terpene synthase family. Mg(2+) serves as cofactor.

It carries out the reaction (2E,6E,10E)-geranylgeranyl diphosphate = ent-copalyl diphosphate. Its function is as follows. Catalyzes the conversion of geranylgeranyl diphosphate to the phytoalexin precursor ent-copalyl diphosphate. The protein is Ent-copalyl diphosphate synthase 2 (CPS2) of Oryza sativa subsp. indica (Rice).